The sequence spans 103 residues: Large ribosomal subunit protein bL21 (103 aa).

It belongs to the bacterial ribosomal protein bL21 family. Part of the 50S ribosomal subunit. Contacts protein L20.

Functionally, this protein binds to 23S rRNA in the presence of protein L20. The protein is Large ribosomal subunit protein bL21 of Actinobacillus pleuropneumoniae serotype 5b (strain L20).